The following is a 148-amino-acid chain: Nucleoside diphosphate kinase 1 (148 aa).

Lys-9, Phe-57, Arg-85, Thr-91, Arg-102, and Asn-112 together coordinate ATP. The active-site Pros-phosphohistidine intermediate is the His-115.

This sequence belongs to the NDK family. Mg(2+) serves as cofactor.

It carries out the reaction a 2'-deoxyribonucleoside 5'-diphosphate + ATP = a 2'-deoxyribonucleoside 5'-triphosphate + ADP. It catalyses the reaction a ribonucleoside 5'-diphosphate + ATP = a ribonucleoside 5'-triphosphate + ADP. Its function is as follows. Major role in the synthesis of nucleoside triphosphates other than ATP. The ATP gamma phosphate is transferred to the NDP beta phosphate via a ping-pong mechanism, using a phosphorylated active-site intermediate. The sequence is that of Nucleoside diphosphate kinase 1 from Nicotiana tabacum (Common tobacco).